A 252-amino-acid chain; its full sequence is MAHARPKLPRINLRLDAEYPNDPRVQQLHLQILNNPNYANNVRAPLSYLVFLTAQEMYEVFVRQARGVNKKRSGGPEKPILPANPGAGPQNAPGCGGGGSGSGGSGPPGGSAPQIQPPNNGVPSNQVSSNSGSAAGSGSGSGASSNSGAGSGAGAGSSACPSSGAGSGAGAGSSAGSNVQAPPAPPPLPQVPMVPGVVNGQEMYLPLGPVNGLPQQLGTAGSDNSGGQASSPGSQNPPTKPVAPRGKLGKGR.

Residues 69-252 (NKKRSGGPEK…APRGKLGKGR (184 aa)) form a disordered region. A compositionally biased stretch (low complexity) spans 83–93 (ANPGAGPQNAP). A compositionally biased stretch (gly residues) spans 94 to 109 (GCGGGGSGSGGSGPPG). The segment covering 182–192 (PPAPPPLPQVP) has biased composition (pro residues). Residues 213–237 (LPQQLGTAGSDNSGGQASSPGSQNP) show a composition bias toward polar residues.

The protein belongs to the herpesviridae small capsomere-interacting protein family. Interacts with the major capsid protein/MCP.

It localises to the virion. The protein localises to the host nucleus. Its function is as follows. Participates in the assembly of the infectious particles by decorating the outer surface of the capsid shell and thus forming a layer between the capsid and the tegument. Complexes composed of the major capsid protein and small capsomere-interacting protein/SCP assemble together in the host cytoplasm and are translocated to the nucleus, where they accumulate and participate in capsid assembly. In Connochaetes taurinus (Blue wildebeest), this protein is Small capsomere-interacting protein.